A 263-amino-acid polypeptide reads, in one-letter code: Type III pantothenate kinase (263 aa).

9–16 (DIGNTNVK) provides a ligand contact to ATP. Substrate-binding positions include Y103 and 110–113 (GADR). Catalysis depends on D112, which acts as the Proton acceptor. D134 contributes to the K(+) binding site. T137 contacts ATP. A substrate-binding site is contributed by T190.

This sequence belongs to the type III pantothenate kinase family. As to quaternary structure, homodimer. The cofactor is NH4(+). It depends on K(+) as a cofactor.

The protein localises to the cytoplasm. It catalyses the reaction (R)-pantothenate + ATP = (R)-4'-phosphopantothenate + ADP + H(+). It functions in the pathway cofactor biosynthesis; coenzyme A biosynthesis; CoA from (R)-pantothenate: step 1/5. Functionally, catalyzes the phosphorylation of pantothenate (Pan), the first step in CoA biosynthesis. The polypeptide is Type III pantothenate kinase (Oleidesulfovibrio alaskensis (strain ATCC BAA-1058 / DSM 17464 / G20) (Desulfovibrio alaskensis)).